Reading from the N-terminus, the 198-residue chain is Large ribosomal subunit protein bL9 (198 aa).

The segment covering 156 to 166 (RGEDISTRQED) has biased composition (basic and acidic residues). The interval 156–198 (RGEDISTRQEDQDAAAEALAAAGEFFDPEAHNDGEQEEEAGDK) is disordered.

Belongs to the bacterial ribosomal protein bL9 family.

Binds to the 23S rRNA. The chain is Large ribosomal subunit protein bL9 from Rhodopseudomonas palustris (strain BisB18).